The chain runs to 290 residues: Agroclavine dehydrogenase (290 aa).

The protein belongs to the fgaFS/easG family. In terms of assembly, monomer.

It carries out the reaction agroclavine + NADP(+) = didehydroagroclavine + NADPH + H(+). The protein operates within alkaloid biosynthesis; ergot alkaloid biosynthesis. In terms of biological role, agroclavine dehydrogenase; part of the gene cluster that mediates the biosynthesis of fungal ergot alkaloid. DmaW catalyzes the first step of ergot alkaloid biosynthesis by condensing dimethylallyl diphosphate (DMAP) and tryptophan to form 4-dimethylallyl-L-tryptophan. The second step is catalyzed by the methyltransferase easF that methylates 4-dimethylallyl-L-tryptophan in the presence of S-adenosyl-L-methionine, resulting in the formation of 4-dimethylallyl-L-abrine. The catalase easC and the FAD-dependent oxidoreductase easE then transform 4-dimethylallyl-L-abrine to chanoclavine-I which is further oxidized by easD in the presence of NAD(+), resulting in the formation of chanoclavine-I aldehyde. Agroclavine dehydrogenase easG then mediates the conversion of chanoclavine-I aldehyde to agroclavine via a non-enzymatic adduct reaction: the substrate is an iminium intermediate that is formed spontaneously from chanoclavine-I aldehyde in the presence of glutathione. The presence of easA is not required to complete this reaction. Further conversion of agroclavine to paspalic acid is a two-step process involving oxidation of agroclavine to elymoclavine and of elymoclavine to paspalic acid, the second step being performed by the elymoclavine oxidase cloA. Paspalic acid is then further converted to D-lysergic acid. Ergopeptines are assembled from D-lysergic acid and three different amino acids by the D-lysergyl-peptide-synthetases composed each of a monomudular and a trimodular nonribosomal peptide synthetase subunit. LpsB and lpsC encode the monomodular subunits responsible for D-lysergic acid activation and incorporation into the ergopeptine backbone. LpsA1 and A2 subunits encode the trimodular nonribosomal peptide synthetase assembling the tripeptide portion of ergopeptines. LpsA1 is responsible for formation of the major ergopeptine, ergotamine, and lpsA2 for alpha-ergocryptine, the minor ergopeptine of the total alkaloid mixture elaborated by C.purpurea. D-lysergyl-tripeptides are assembled by the nonribosomal peptide synthetases and released as N-(D-lysergyl-aminoacyl)-lactams. Cyclolization of the D-lysergyl-tripeptides is performed by the Fe(2+)/2-ketoglutarate-dependent dioxygenase easH which introduces a hydroxyl group into N-(D-lysergyl-aminoacyl)-lactam at alpha-C of the aminoacyl residue followed by spontaneous condensation with the terminal lactam carbonyl group. The chain is Agroclavine dehydrogenase from Claviceps purpurea (strain 20.1) (Ergot fungus).